A 193-amino-acid polypeptide reads, in one-letter code: uncharacterized protein (193 aa).

3 helical membrane passes run 5 to 25 (LILL…FIIF), 63 to 83 (IFIL…LINI), and 90 to 110 (ILTF…LTPA).

It is found in the cell membrane. This is an uncharacterized protein from Methanocaldococcus jannaschii (strain ATCC 43067 / DSM 2661 / JAL-1 / JCM 10045 / NBRC 100440) (Methanococcus jannaschii).